Consider the following 401-residue polypeptide: Phosrestin-1 (401 aa).

The protein belongs to the arrestin family.

In terms of biological role, directly interacts with light-activated rhodopsin thereby activating the phosphorylation of metarhodopsin. Inhibits the dephosphorylation of metarhodopsin. This Calliphora vicina (Blue blowfly) protein is Phosrestin-1 (ARR2).